The following is a 271-amino-acid chain: Interleukin-1 alpha (271 aa).

A propeptide spanning residues Met1–Arg112 is cleaved from the precursor. Lys82 is subject to N6-acetyllysine. A nuclear localization signal (NLS) region spans residues Lys82 to Leu86. Ser87 carries the phosphoserine modification. 4 N-linked (GlcNAc...) asparagine glycosylation sites follow: Asn102, Asn121, Asn137, and Asn141.

It belongs to the IL-1 family. As to quaternary structure, monomer. Interacts with TMED10; the interaction mediates the translocation from the cytoplasm into the ERGIC (endoplasmic reticulum-Golgi intermediate compartment) and thereby secretion. Interacts with IL1R1. Interacts with S100A13; this interaction is the first step in the export of IL1A, followed by direct translocation of this complex across the plasma membrane. In terms of processing, acetylated within its nuclear localization sequence, which impacts subcellular localization. Proteolytic processed by CAPN1 in a calcium-dependent manner. Cleavage from 31 kDa precursor to 18 kDa biologically active molecules. Post-translationally, phosphorylated. Phosphorylation greatly enhances susceptibility to digestion and promotes the conversion of pre-IL1A alpha to the biologically active IL1A.

It localises to the nucleus. The protein localises to the cytoplasm. Its subcellular location is the secreted. Its function is as follows. Cytokine constitutively present intracellularly in nearly all resting non-hematopoietic cells that plays an important role in inflammation and bridges the innate and adaptive immune systems. After binding to its receptor IL1R1 together with its accessory protein IL1RAP, forms the high affinity interleukin-1 receptor complex. Signaling involves the recruitment of adapter molecules such as MYD88, IRAK1 or IRAK4. In turn, mediates the activation of NF-kappa-B and the three MAPK pathways p38, p42/p44 and JNK pathways. Within the cell, acts as an alarmin and cell death results in its liberation in the extracellular space after disruption of the cell membrane to induce inflammation and alert the host to injury or damage. In addition to its role as a danger signal, which occurs when the cytokine is passively released by cell necrosis, directly senses DNA damage and acts as signal for genotoxic stress without loss of cell integrity. The sequence is that of Interleukin-1 alpha (IL1A) from Macaca fascicularis (Crab-eating macaque).